The primary structure comprises 167 residues: Novel acetylcholine receptor chaperone (167 aa).

Residues 1-5 (MASPR) are Cytoplasmic-facing. A helical membrane pass occupies residues 6–26 (TITIMALSVALGLFFVFMGTI). Residues 27-61 (KLTPRLSKDAYSEMKRAYKSYVRALPLLKKMGINS) are Lumenal-facing. An interaction with NGFR region spans residues 43-54 (AYKSYVRALPLL). The helical transmembrane segment at 62 to 82 (ILLRKSIGALEVACGIVMTLV) threads the bilayer. The Cytoplasmic segment spans residues 83–88 (PGRPKD). The helical transmembrane segment at 89–109 (VANFFLLLLVLAVLFFHQLVG) threads the bilayer. The Lumenal segment spans residues 110 to 114 (DPLKR). Residues 115 to 132 (YAHALVFGILLTCRLLIA) form a helical membrane-spanning segment. Residues 133 to 167 (RKPEDRSSEKKALPESAEEQPSLYEKAPQGKVKVS) are Cytoplasmic-facing. Over residues 135–145 (PEDRSSEKKAL) the composition is skewed to basic and acidic residues. The disordered stretch occupies residues 135-167 (PEDRSSEKKALPESAEEQPSLYEKAPQGKVKVS).

It belongs to the DoxX family. May interact with NGFR. Interacts with RPN1, RPN2 and CANX. In terms of tissue distribution, brain (at protein level). Expressed in the spinal cord dorsal horn (at protein level).

Its subcellular location is the peroxisome membrane. The protein localises to the cytoplasmic vesicle. The protein resides in the endoplasmic reticulum membrane. Functionally, molecular chaperone which mediates the proper assembly and functional expression of the nicotinic acetylcholine receptors (nAChRs) throughout the brain. Essential for the proper folding, assembly, function and surface trafficking of alpha-7 (CHRNA7), alpha-4-beta-2, alpha-3-beta-2 and alpha-3-beta-4 receptors. Stably associates with ribophorin-1 (RPN1) and ribophorin-2 (RPN2) (components of the oligosaccharyl transferase (OST) complex) and with calnexin (CANX), both of which are critical for NACHO-mediated effects on CHRNA7 assembly and function. Facilitates the proper folding and assembly of alpha-6-beta-2 and alpha-6-beta-2-beta-3 receptors and acts at early stages of the nAChRs subunit assembly. Promotes the expression of the alpha-4(2):beta-2(3) stoichiometric form over the alpha-4(3):beta-2(2) form. This is Novel acetylcholine receptor chaperone from Mus musculus (Mouse).